The chain runs to 383 residues: Acetylornithine deacetylase (383 aa).

His80 serves as a coordination point for Zn(2+). The active site involves Asp82. Zn(2+) is bound at residue Asp112. The active site involves Glu144. Zn(2+) contacts are provided by Glu145, Glu169, and His355.

It belongs to the peptidase M20A family. ArgE subfamily. As to quaternary structure, homodimer. The cofactor is Zn(2+). It depends on Co(2+) as a cofactor. Glutathione serves as cofactor.

Its subcellular location is the cytoplasm. It catalyses the reaction N(2)-acetyl-L-ornithine + H2O = L-ornithine + acetate. The protein operates within amino-acid biosynthesis; L-arginine biosynthesis; L-ornithine from N(2)-acetyl-L-ornithine (linear): step 1/1. Catalyzes the hydrolysis of the amide bond of N(2)-acetylated L-amino acids. Cleaves the acetyl group from N-acetyl-L-ornithine to form L-ornithine, an intermediate in L-arginine biosynthesis pathway, and a branchpoint in the synthesis of polyamines. This is Acetylornithine deacetylase from Salmonella paratyphi A (strain ATCC 9150 / SARB42).